Reading from the N-terminus, the 349-residue chain is Green-sensitive opsin-4 (349 aa).

Residues 1–36 are Extracellular-facing; it reads MNGTEGNNFYIPLSNRTGLARSPYEYPQYYLAEPWQ. Residues Asn-2 and Asn-15 are each glycosylated (N-linked (GlcNAc...) asparagine). The helical transmembrane segment at 37–61 threads the bilayer; sequence FKLLAVYMFFLICLGFPINGLTLLV. At 62–73 the chain is on the cytoplasmic side; it reads TAQHKKLRQPLN. The chain crosses the membrane as a helical span at residues 74–99; sequence FILVNLAVAGTIMVCFGFTVTFYTAI. Residues 100–113 are Extracellular-facing; that stretch reads NGYFVLGPTGCAIE. Cys-110 and Cys-187 are oxidised to a cystine. The chain crosses the membrane as a helical span at residues 114 to 133; the sequence is GFMATLGGEVALWSLVVLAV. The Cytoplasmic portion of the chain corresponds to 134–152; that stretch reads ERYIVVCKPMGSFKFSASH. Residues 153-176 traverse the membrane as a helical segment; the sequence is AFAGCAFTWVMAMACAAPPLVGWS. The Extracellular portion of the chain corresponds to 177-202; sequence RYIPEGMQCSCGPDYYTLNPEYNNES. Residue Asn-200 is glycosylated (N-linked (GlcNAc...) asparagine). A helical membrane pass occupies residues 203–230; that stretch reads YVLYMFICHFILPVTIIFFTYGRLVCTV. The Cytoplasmic segment spans residues 231-252; that stretch reads KAAAAQQQESESTQKAEREVTR. Residues 253–276 form a helical membrane-spanning segment; the sequence is MVILMVLGFLIAWTPYATVAAWIF. The Extracellular segment spans residues 277 to 284; it reads FNKGAAFS. The chain crosses the membrane as a helical span at residues 285 to 309; that stretch reads AQFMAVPAFFSKTSALYNPVIYVLL. Lys-296 carries the post-translational modification N6-(retinylidene)lysine. Over 310-349 the chain is Cytoplasmic; that stretch reads NKQFRNCMLTTLFCGKNPLGDDESSTVSTSKTEVSSVSPA. A disordered region spans residues 329 to 349; it reads GDDESSTVSTSKTEVSSVSPA. The span at 334–349 shows a compositional bias: low complexity; that stretch reads STVSTSKTEVSSVSPA.

It belongs to the G-protein coupled receptor 1 family. Opsin subfamily. Phosphorylated on some or all of the serine and threonine residues present in the C-terminal region. In terms of tissue distribution, retinal double cone accessory photoreceptor cell outer segments.

Its subcellular location is the membrane. In terms of biological role, visual pigments are the light-absorbing molecules that mediate vision. They consist of an apoprotein, opsin, covalently linked to cis-retinal. This Danio rerio (Zebrafish) protein is Green-sensitive opsin-4 (opn1mw4).